The sequence spans 929 residues: Isoleucine--tRNA ligase (929 aa).

Residues 57–67 (PYANGNIHVGH) carry the 'HIGH' region motif. Position 554 (E554) interacts with L-isoleucyl-5'-AMP. Residues 595–599 (KMSKS) carry the 'KMSKS' region motif. K598 lines the ATP pocket. 4 residues coordinate Zn(2+): C888, C891, C908, and C911.

Belongs to the class-I aminoacyl-tRNA synthetase family. IleS type 1 subfamily. Monomer. The cofactor is Zn(2+).

It localises to the cytoplasm. The catalysed reaction is tRNA(Ile) + L-isoleucine + ATP = L-isoleucyl-tRNA(Ile) + AMP + diphosphate. Its function is as follows. Catalyzes the attachment of isoleucine to tRNA(Ile). As IleRS can inadvertently accommodate and process structurally similar amino acids such as valine, to avoid such errors it has two additional distinct tRNA(Ile)-dependent editing activities. One activity is designated as 'pretransfer' editing and involves the hydrolysis of activated Val-AMP. The other activity is designated 'posttransfer' editing and involves deacylation of mischarged Val-tRNA(Ile). The chain is Isoleucine--tRNA ligase from Streptococcus thermophilus (strain CNRZ 1066).